Consider the following 646-residue polypeptide: Pentatricopeptide repeat-containing protein At5g48910 (646 aa).

Positions 1-24 (MNPTQTLFSPGGNSPASSPASHPS) are disordered. Residues 9-24 (SPGGNSPASSPASHPS) show a composition bias toward low complexity. PPR repeat units follow at residues 54 to 88 (DTLA…MPQR), 89 to 126 (NCFS…FVEP), 127 to 161 (NRFT…GFGG), 162 to 197 (DEFV…DMVV), 207 to 237 (EIVL…MRQR), 238 to 272 (SVVS…DIRP), 273 to 307 (NYVT…GIRI), 308 to 338 (DDVL…LPRE), 339 to 373 (NVIT…GVRP), 374 to 409 (SDVA…GLEP), and 410 to 440 (RIEH…MPIK). The tract at residues 445-520 (IWKALLGACR…DPGCSLIDID (76 aa)) is type E motif. Residues 521-551 (GVLHEFVVEDDSHPKAKEINSMLVEISDKLR) form a type E(+) motif region. The type DYW motif stretch occupies residues 552–646 (LAGYRPITTQ…DGSCSCMDYW (95 aa)).

The protein belongs to the PPR family. PCMP-H subfamily.

The chain is Pentatricopeptide repeat-containing protein At5g48910 (PCMP-H38) from Arabidopsis thaliana (Mouse-ear cress).